The chain runs to 507 residues: ATP synthase subunit alpha, chloroplastic (507 aa).

Residue 170–177 (GDRQTGKT) participates in ATP binding. Phosphothreonine is present on Thr257.

This sequence belongs to the ATPase alpha/beta chains family. F-type ATPases have 2 components, CF(1) - the catalytic core - and CF(0) - the membrane proton channel. CF(1) has five subunits: alpha(3), beta(3), gamma(1), delta(1), epsilon(1). CF(0) has four main subunits: a, b, b' and c.

The protein resides in the plastid. Its subcellular location is the chloroplast thylakoid membrane. It catalyses the reaction ATP + H2O + 4 H(+)(in) = ADP + phosphate + 5 H(+)(out). Functionally, produces ATP from ADP in the presence of a proton gradient across the membrane. The alpha chain is a regulatory subunit. This is ATP synthase subunit alpha, chloroplastic from Arabis hirsuta (Hairy rock-cress).